The chain runs to 512 residues: Maturase K (512 aa).

Belongs to the intron maturase 2 family. MatK subfamily.

It localises to the plastid. It is found in the chloroplast. Functionally, usually encoded in the trnK tRNA gene intron. Probably assists in splicing its own and other chloroplast group II introns. This chain is Maturase K, found in Dalea wrightii (Wright's prairie clover).